The sequence spans 317 residues: Protein CbxX, chromosomal (317 aa).

The interval 1 to 21 (MSAPETTAPLQPPAAPAASLP) is disordered. 85 to 92 (GNPGTGKT) contacts ATP.

This sequence belongs to the CbxX/CfxQ family.

Its function is as follows. Seems to be necessary for the expression of RuBisCO. The chain is Protein CbxX, chromosomal (cbxXC) from Cupriavidus necator (strain ATCC 17699 / DSM 428 / KCTC 22496 / NCIMB 10442 / H16 / Stanier 337) (Ralstonia eutropha).